The chain runs to 338 residues: Extracellular globin (338 aa).

Residues 1 to 18 (MRSLLLLSIVFFVVTVSA) form the signal peptide. N19 is a glycosylation site (N-linked (GlcNAc...) asparagine). Globin domains follow at residues 25-167 (CMKS…KHGR) and 174-316 (CMRS…RHGK). 2 residues coordinate heme b: Q82 and H114. N-linked (GlcNAc...) asparagine glycosylation is present at N216. Q231 and H263 together coordinate heme b. The disordered stretch occupies residues 313–338 (RHGKEHHEHKEEHKEEHKEEHKEEQH).

The protein belongs to the globin family. As to quaternary structure, homooctamer.

It localises to the secreted. The protein resides in the extracellular space. Its function is as follows. Has an extremely high oxygen affinity. In a vacuum, it takes several minutes to release its oxygen compared to milliseconds for a normal globin. Could be used as an oxygen scavenger for sterol biosynthesis. The sequence is that of Extracellular globin from Ascaris suum (Pig roundworm).